Consider the following 485-residue polypeptide: MSETPAQSSIKQERISYTPPESPVASHRSSTPLHVHTVPRALRMEEDSIHLPTHLRLQPIYWSRDDVAQWLKWAENEFSLRPIESNKFEMNGKALLLLTKEDFRYRSPHSGDVLYELLQHILKQRKSRMLFSPFFPPGDSIHTKPEVLLHQNHDEDNCVQRTPRTPAESVHHNPPTIELLHRPRSPITTNHRPSPDPEQQRPQRSPLDNMSRRLSPVEKAQGPRLQQENNHQETYPLSVSPVENNHCLPSSPWQESTRVIQLMPSPIMHPLILNPRHSHSVDFKQSRHSEDGMNREGKPINLSHREDLAYLNHIMVSMSPPEEHAMPIGRIADCRLLWDYVYQLLSDSRYENFIRWEDKESKIFRIVDPNGLARLWGNHKNRTNMTYEKMSRALRHYYKLNIIRKEPGQRLLFRFMKTPDEIMSGRTDRLEHLESQVLDEQTYQEDEPTIASPVGWPRGNLPTGTAGGVMEAGELGVAVKEETRE.

A compositionally biased stretch (polar residues) spans 1–10 (MSETPAQSSI). The disordered stretch occupies residues 1-32 (MSETPAQSSIKQERISYTPPESPVASHRSSTP). Lys-11 bears the N6-acetyllysine; alternate mark. Lys-11 is covalently cross-linked (Glycyl lysine isopeptide (Lys-Gly) (interchain with G-Cter in SUMO2); alternate). A Phosphothreonine modification is found at Thr-18. Ser-22 is subject to Phosphoserine. The PNT domain occupies 41–125 (ALRMEEDSIH…ELLQHILKQR (85 aa)). Residues 157–210 (NCVQRTPRTPAESVHHNPPTIELLHRPRSPITTNHRPSPDPEQQRPQRSPLDNM) form a disordered region. Thr-165 carries the post-translational modification Phosphothreonine. Phosphoserine is present on residues Ser-215, Ser-240, and Ser-251. Lys-284 is covalently cross-linked (Glycyl lysine isopeptide (Lys-Gly) (interchain with G-Cter in SUMO2)). The residue at position 298 (Lys-298) is an N6-acetyllysine; alternate. A Glycyl lysine isopeptide (Lys-Gly) (interchain with G-Cter in SUMO2); alternate cross-link involves residue Lys-298. Residue Ser-319 is modified to Phosphoserine. The segment at residues 335-416 (RLLWDYVYQL…PGQRLLFRFM (82 aa)) is a DNA-binding region (ETS). Glycyl lysine isopeptide (Lys-Gly) (interchain with G-Cter in SUMO2) cross-links involve residues Lys-399 and Lys-417. Residues 440 to 485 (EQTYQEDEPTIASPVGWPRGNLPTGTAGGVMEAGELGVAVKEETRE) are disordered.

Belongs to the ETS family. Can form homodimers or heterodimers with TEL2 or FLI1. Interacts with L3MBTL1 and HDAC9.

It is found in the nucleus. Transcriptional repressor; binds to the DNA sequence 5'-CCGGAAGT-3'. Plays a role in hematopoiesis and malignant transformation. This Mus musculus (Mouse) protein is Transcription factor ETV6 (Etv6).